A 330-amino-acid chain; its full sequence is Phosphate acyltransferase (330 aa).

This sequence belongs to the PlsX family. Homodimer. Probably interacts with PlsY.

The protein resides in the cytoplasm. The catalysed reaction is a fatty acyl-[ACP] + phosphate = an acyl phosphate + holo-[ACP]. Its pathway is lipid metabolism; phospholipid metabolism. Functionally, catalyzes the reversible formation of acyl-phosphate (acyl-PO(4)) from acyl-[acyl-carrier-protein] (acyl-ACP). This enzyme utilizes acyl-ACP as fatty acyl donor, but not acyl-CoA. The chain is Phosphate acyltransferase from Bacillus anthracis (strain A0248).